Here is a 251-residue protein sequence, read N- to C-terminus: CDP-diacylglycerol pyrophosphatase (251 aa).

A helical membrane pass occupies residues alanine 4–tryptophan 24.

It belongs to the Cdh family.

The protein resides in the cell inner membrane. It catalyses the reaction a CDP-1,2-diacyl-sn-glycerol + H2O = a 1,2-diacyl-sn-glycero-3-phosphate + CMP + 2 H(+). It participates in phospholipid metabolism; CDP-diacylglycerol degradation; phosphatidate from CDP-diacylglycerol: step 1/1. In Escherichia coli O45:K1 (strain S88 / ExPEC), this protein is CDP-diacylglycerol pyrophosphatase.